Here is a 431-residue protein sequence, read N- to C-terminus: Phosphoribosylamine--glycine ligase (431 aa).

Positions 108–315 constitute an ATP-grasp domain; that stretch reads KDFLARHEIP…LVLLVEAAFA (208 aa). 134–195 contacts ATP; the sequence is LQEKGAPIVI…EEFLDGEEAS (62 aa). Mg(2+) is bound by residues glutamate 285 and asparagine 287.

This sequence belongs to the GARS family. Mg(2+) serves as cofactor. Mn(2+) is required as a cofactor.

It catalyses the reaction 5-phospho-beta-D-ribosylamine + glycine + ATP = N(1)-(5-phospho-beta-D-ribosyl)glycinamide + ADP + phosphate + H(+). Its pathway is purine metabolism; IMP biosynthesis via de novo pathway; N(1)-(5-phospho-D-ribosyl)glycinamide from 5-phospho-alpha-D-ribose 1-diphosphate: step 2/2. The sequence is that of Phosphoribosylamine--glycine ligase from Pseudomonas putida (strain ATCC 47054 / DSM 6125 / CFBP 8728 / NCIMB 11950 / KT2440).